The sequence spans 283 residues: uncharacterized protein (283 aa).

The active site involves aspartate 121.

Belongs to the pseudouridine synthase RluA family.

The enzyme catalyses a uridine in RNA = a pseudouridine in RNA. This is an uncharacterized protein from Bacillus subtilis (strain 168).